A 79-amino-acid polypeptide reads, in one-letter code: MAGLLQIRDALALHGNVQALQLSRQLAAPLPLVQAMLERLIAMGKVERIEQDNSACLSGSCKSCPEGQKCSSTVVYRLK.

Residues C56, C61, C64, and C70 each contribute to the iron-sulfur cluster site.

This sequence belongs to the FeoC family.

Its function is as follows. May function as a transcriptional regulator that controls feoABC expression. The sequence is that of Probable [Fe-S]-dependent transcriptional repressor from Serratia proteamaculans (strain 568).